The chain runs to 269 residues: Aquaporin-1 (269 aa).

Over 2–11 (ASEFKKKLFW) the chain is Cytoplasmic. Residues 12–29 (RAVVAEFLATTLFVFISI) traverse the membrane as a helical segment. The Extracellular segment spans residues 30–46 (GSALGFKYPVGNNQTAV). N-linked (GlcNAc...) asparagine glycosylation occurs at asparagine 42. A helical membrane pass occupies residues 47 to 65 (QDNVKVSLAFGLSIATLAQ). The Cytoplasmic segment spans residues 66–68 (SVG). An intramembrane segment occupies 69–82 (HISGAHLNPAVTLG). An NPA 1 motif is present at residues 76-78 (NPA). The Cytoplasmic portion of the chain corresponds to 83–90 (LLLSCQIS). Residues 91–109 (IFRALMYIIAQCVGAIVAT) traverse the membrane as a helical segment. The Extracellular segment spans residues 110 to 133 (AILSGITSSLTGNSLGRNDLADGV). Residues 134 to 153 (NSGQGLGIEIIGTLQLVLCV) form a helical membrane-spanning segment. Residues 154–163 (LATTDRRRRD) are Cytoplasmic-facing. The helical transmembrane segment at 164-181 (LGGSAPLAIGLSVALGHL) threads the bilayer. Topologically, residues 182–186 (LAIDY) are extracellular. An intramembrane segment occupies 187 to 199 (TGCGINPARSFGS). Residues 192–194 (NPA) carry the NPA 2 motif. Residues 200–206 (AVITHNF) lie on the Extracellular side of the membrane. N-linked (GlcNAc...) asparagine glycosylation is present at asparagine 205. A helical membrane pass occupies residues 207–224 (SNHWIFWVGPFIGGALAV). Residues 225–269 (LIYDFILAPRSSDLTDRVKVWTSGQVEEYDLDADDINSRVEMKPK) are Cytoplasmic-facing. Serine 247 carries the phosphoserine modification. Phosphotyrosine is present on tyrosine 253. Residue serine 262 is modified to Phosphoserine.

It belongs to the MIP/aquaporin (TC 1.A.8) family. As to quaternary structure, homotetramer; each monomer provides an independent water pore. Component of the ankyrin-1 complex in the erythrocyte, composed of ANK1, RHCE, RHAG, SLC4A1, EPB42, GYPA, GYPB and AQP1. Interacts with EPHB2; involved in endolymph production in the inner ear. Identified in a complex with STOM. Interacts (via the N-terminal) with ANK1 (via ANK 1-5 repeats). Interacts (via the C-terminal) with EPB42. In terms of tissue distribution, detected in erythrocytes (at protein level). Expressed in a number of tissues including erythrocytes, renal tubules, retinal pigment epithelium, heart, lung, skeletal muscle, kidney and pancreas. Weakly expressed in brain, placenta and liver.

It is found in the cell membrane. It catalyses the reaction H2O(in) = H2O(out). The catalysed reaction is nitric oxide(out) = nitric oxide(in). The enzyme catalyses CO2(out) = CO2(in). It carries out the reaction glycerol(in) = glycerol(out). It catalyses the reaction H2O2(out) = H2O2(in). The catalysed reaction is K(+)(in) = K(+)(out). The enzyme catalyses Na(+)(in) = Na(+)(out). The water channel activity is inhibited by P-choloromercuribenzene sulphonate and diethylpyrocarbonate(DPPC). The glycerol channel activity is inhibited by P-choloromercuribenzene sulphonate, diethylpyrocarbonate(DPPC), phloretin and Cu(2+). Inhibited by mercury. Functionally, forms a water channel that facilitates the transport of water across cell membranes, playing a crucial role in water homeostasis in various tissues. Could also be permeable to small solutes including hydrogen peroxide, glycerol and gases such as amonnia (NH3), nitric oxide (NO) and carbon dioxide (CO2). Recruited to the ankyrin-1 complex, a multiprotein complex of the erythrocyte membrane, it could be part of a CO2 metabolon, linking facilitated diffusion of CO2 across the membrane, anion exchange of Cl(-)/HCO3(-) and interconversion of dissolved CO2 and carbonic acid in the cytosol. In vitro, it shows non-selective gated cation channel activity and may be permeable to cations like K(+) and Na(+) in vivo. This Homo sapiens (Human) protein is Aquaporin-1.